The sequence spans 910 residues: Protein translocase subunit SecA (910 aa).

ATP-binding positions include Gln87, 105 to 109, and Asp512; that span reads GEGKT. Basic and acidic residues-rich tracts occupy residues 561–571, 841–853, and 880–890; these read RHESRRIDNQL, EEERRQQAEELAR, and TFEREARKVGR. Disordered regions lie at residues 561-584 and 835-910; these read RHESRRIDNQLRGRSGRQGDAGSS and EEVD…GKIN. Residues Cys894, Cys896, Cys905, and His906 each contribute to the Zn(2+) site. Basic residues predominate over residues 900-910; it reads KKYKQCHGKIN.

The protein belongs to the SecA family. Monomer and homodimer. Part of the essential Sec protein translocation apparatus which comprises SecA, SecYEG and auxiliary proteins SecDF-YajC and YidC. Requires Zn(2+) as cofactor.

The protein localises to the cell inner membrane. Its subcellular location is the cytoplasm. The enzyme catalyses ATP + H2O + cellular proteinSide 1 = ADP + phosphate + cellular proteinSide 2.. Its function is as follows. Part of the Sec protein translocase complex. Interacts with the SecYEG preprotein conducting channel. Has a central role in coupling the hydrolysis of ATP to the transfer of proteins into and across the cell membrane, serving both as a receptor for the preprotein-SecB complex and as an ATP-driven molecular motor driving the stepwise translocation of polypeptide chains across the membrane. This Photobacterium profundum (strain SS9) protein is Protein translocase subunit SecA.